A 395-amino-acid chain; its full sequence is uncharacterized protein (395 aa).

Disordered regions lie at residues 185–282 (RREV…SSTA) and 316–372 (GSST…TCSS). Basic residues predominate over residues 248 to 257 (LHLRTRHPHR). A compositionally biased stretch (low complexity) spans 342–360 (ARASTHSRSSPSASANSRY).

This is an uncharacterized protein from Streptomyces fradiae (Streptomyces roseoflavus).